A 243-amino-acid polypeptide reads, in one-letter code: Ubiquinone/menaquinone biosynthesis C-methyltransferase UbiE (243 aa).

Residues Thr69, Asp90, and 116-117 (DA) contribute to the S-adenosyl-L-methionine site.

Belongs to the class I-like SAM-binding methyltransferase superfamily. MenG/UbiE family.

It catalyses the reaction a 2-demethylmenaquinol + S-adenosyl-L-methionine = a menaquinol + S-adenosyl-L-homocysteine + H(+). The catalysed reaction is a 2-methoxy-6-(all-trans-polyprenyl)benzene-1,4-diol + S-adenosyl-L-methionine = a 5-methoxy-2-methyl-3-(all-trans-polyprenyl)benzene-1,4-diol + S-adenosyl-L-homocysteine + H(+). It participates in quinol/quinone metabolism; menaquinone biosynthesis; menaquinol from 1,4-dihydroxy-2-naphthoate: step 2/2. It functions in the pathway cofactor biosynthesis; ubiquinone biosynthesis. Methyltransferase required for the conversion of demethylmenaquinol (DMKH2) to menaquinol (MKH2) and the conversion of 2-polyprenyl-6-methoxy-1,4-benzoquinol (DDMQH2) to 2-polyprenyl-3-methyl-6-methoxy-1,4-benzoquinol (DMQH2). In Paraburkholderia phytofirmans (strain DSM 17436 / LMG 22146 / PsJN) (Burkholderia phytofirmans), this protein is Ubiquinone/menaquinone biosynthesis C-methyltransferase UbiE.